We begin with the raw amino-acid sequence, 37 residues long: Protamine Z3 (37 aa).

Residues 1 to 37 (ARSRSRRSYGRGRRRGGRRRRRRRRRRRGGRRGRRSR) are disordered.

As to expression, testis.

Its subcellular location is the nucleus. It localises to the chromosome. Protamines substitute for histones in the chromatin of sperm during the haploid phase of spermatogenesis. They compact sperm DNA into a highly condensed, stable and inactive complex. The protein is Protamine Z3 of Scyliorhinus canicula (Small-spotted catshark).